The sequence spans 875 residues: Probable inorganic carbon transporter subunit DabA (875 aa).

4 residues coordinate Zn(2+): Cys-399, Asp-401, His-581, and Cys-596.

It belongs to the inorganic carbon transporter (TC 9.A.2) DabA family. As to quaternary structure, forms a complex with DabB. Requires Zn(2+) as cofactor.

The protein localises to the cell membrane. Its function is as follows. Part of an energy-coupled inorganic carbon pump. The protein is Probable inorganic carbon transporter subunit DabA of Bacillus thuringiensis (strain Al Hakam).